A 136-amino-acid polypeptide reads, in one-letter code: Holo-[acyl-carrier-protein] synthase (136 aa).

Mg(2+)-binding residues include Asp-7 and Glu-53.

The protein belongs to the P-Pant transferase superfamily. AcpS family. Mg(2+) serves as cofactor.

It localises to the cytoplasm. It catalyses the reaction apo-[ACP] + CoA = holo-[ACP] + adenosine 3',5'-bisphosphate + H(+). In terms of biological role, transfers the 4'-phosphopantetheine moiety from coenzyme A to a Ser of acyl-carrier-protein. The polypeptide is Holo-[acyl-carrier-protein] synthase (Roseiflexus castenholzii (strain DSM 13941 / HLO8)).